A 122-amino-acid chain; its full sequence is Large ribosomal subunit protein uL14 (122 aa).

Belongs to the universal ribosomal protein uL14 family. Part of the 50S ribosomal subunit. Forms a cluster with proteins L3 and L19. In the 70S ribosome, L14 and L19 interact and together make contacts with the 16S rRNA in bridges B5 and B8.

Functionally, binds to 23S rRNA. Forms part of two intersubunit bridges in the 70S ribosome. This chain is Large ribosomal subunit protein uL14, found in Magnetococcus marinus (strain ATCC BAA-1437 / JCM 17883 / MC-1).